The sequence spans 493 residues: V-type proton ATPase subunit B (493 aa).

The protein belongs to the ATPase alpha/beta chains family. In terms of assembly, V-ATPase is a heteromultimeric enzyme composed of a peripheral catalytic V1 complex (main components: subunits A, B, C, D, E, and F) attached to an integral membrane V0 proton pore complex (main component: the proteolipid protein).

Its subcellular location is the cytoplasmic vesicle membrane. It localises to the endosome membrane. The protein resides in the contractile vacuole membrane. Vacuolar ATPase is responsible for acidifying a variety of intracellular compartments in eukaryotic cells. The B subunit is non-catalytic but combines with other subunits to form the catalytic complex. V-ATPase is responsible for energizing electrophoretic K(+)/2H(+) antiport by generating a transmembrane voltage of more than 200 mV. The polypeptide is V-type proton ATPase subunit B (vatB) (Dictyostelium discoideum (Social amoeba)).